The sequence spans 226 residues: MDLIPQQLKAVTLTHVRYRPGDQLGHFLAWISLVPVFISLGGFVSHFLFRRELQGIFFGIGLVISQFINEFIKTSVEQARPETCTLLEACDSHGWPSSHSQFMFFFATYFSLMGCKGIGFWFGLRSRWIMNLLHWSLAVVTMYSRVYLGYHTVAQVFAGAALGGIVGASWFWVVNSVLYPFFPVIEESVLGRWLYVKDTSHIPDVLKFEYDNARAARKDMDSAKSD.

The residue at position 1 (methionine 1) is an N-acetylmethionine. The next 5 membrane-spanning stretches (helical) occupy residues 24–44 (LGHF…GGFV), 52–72 (ELQG…NEFI), 102–122 (FMFF…GFWF), 128–148 (WIMN…RVYL), and 152–174 (TVAQ…FWVV).

This sequence belongs to the PA-phosphatase related phosphoesterase family. In terms of tissue distribution, expressed in root tips, root branch points, vascular tissue of cotyledons and leaves, pistil, anthers and filaments.

It localises to the plastid. Its subcellular location is the chloroplast inner membrane. Inhibited by Mg(2+). Exhibits phosphatidate phosphatase (PAP) activity in vitro. May play a primary role as PAP in plastids. The chain is Lipid phosphate phosphatase gamma (LPPG) from Arabidopsis thaliana (Mouse-ear cress).